The chain runs to 452 residues: Probable ECA polymerase (452 aa).

The next 11 membrane-spanning stretches (helical) occupy residues 6–26 (FSGLLVVWLLSTLFIATLTWF), 37–57 (VFFSLLFLLTFFFGFPLTSVL), 63–83 (VGVAPPEILLQALLSAACFYG), 118–138 (VILMGIALVSVAIFFMHNGFL), 155–175 (GVALKRFFYFFIPAMLVVYFL), 181–201 (AWLFFLVSTVAFGLLTYMIVG), 207–227 (IIIAFAIFLFIGIIRGWISLW), 228–248 (MLVAAGVLGIVGMFWLALKRY), 341–361 (LVVMGGALFIPLGAIVVGLII), 378–398 (YKAAILHSFCFGAIFNMIVLA), and 410–430 (VFFLVVFGASLLVAKLLFWLF).

It belongs to the WzyE family. In terms of assembly, probably part of a complex composed of WzxE, WzyE and WzzE.

The protein resides in the cell inner membrane. It functions in the pathway bacterial outer membrane biogenesis; enterobacterial common antigen biosynthesis. In terms of biological role, probably involved in the polymerization of enterobacterial common antigen (ECA) trisaccharide repeat units. The polypeptide is Probable ECA polymerase (Salmonella agona (strain SL483)).